The sequence spans 874 residues: Leucine--tRNA ligase (874 aa).

Residues 47–57 carry the 'HIGH' region motif; sequence PYPSGKLHMGH. A 'KMSKS' region motif is present at residues 636–640; the sequence is KMSKS. Lys-639 contacts ATP.

It belongs to the class-I aminoacyl-tRNA synthetase family.

The protein localises to the cytoplasm. It catalyses the reaction tRNA(Leu) + L-leucine + ATP = L-leucyl-tRNA(Leu) + AMP + diphosphate. This is Leucine--tRNA ligase from Acinetobacter baumannii (strain AB0057).